A 267-amino-acid polypeptide reads, in one-letter code: Strigolactone esterase D14 (267 aa).

The active-site Nucleophile is the serine 97. Catalysis depends on residues aspartate 218 and histidine 247.

The protein belongs to the AB hydrolase superfamily. As to quaternary structure, interacts with SMXL6, SMXL7 and SMXL8. The interaction with SMXLs occurs in the presence of (2'R) stereoisomers of strigolactones, but not (2'S) stereoisomers. Interacts with MAX2. Forms a complex with MAX2 and SKP1A/ASK1 in presence of strigolactone. Expressed at high levels in rosette and cauline leaves and at lower levels in axillary buds, inflorescences, stems, roots and developing vascular tissue of cotyledons.

It localises to the cytoplasm. It is found in the nucleus. In terms of biological role, involved in strigolactone signaling pathway. Does not move long distances acropetally in the plant to regulate shoot branching and is rapidly degraded in the presence of strigolactones. Functions downstream of strigolactone synthesis, as a component of hormone signaling and as an enzyme that participates in the conversion of strigolactones to the bioactive form. Acts probably as a strigolactone receptor. Strigolactones are hormones that inhibit tillering and shoot branching through the MAX-dependent pathway, contribute to the regulation of shoot architectural response to phosphate-limiting conditions and function as rhizosphere signal that stimulates hyphal branching of arbuscular mycorrhizal fungi and trigger seed germination of root parasitic weeds. Hydrolyzes methyl carlactonoate (MeCLA), but not carlactone (CL) or carlactonoic acid (CLA). Hydrolyzes the butenolide ring of strigolactones. The initial nucleophilic attack causes an electron shift, followed by the addition of a water molecule, to lead to the release of the ABC ring product and the formation of a 'Ser-97'-stabilized open lactone intermediate. Has no esterase activity for 4-nitrophenyl butyrate. Binds and hydrolyzes the synthetic strigolactone analog GR24 in vitro. Forms a stable covalent complex with the D-ring of strigolactone, which is essential for hormone bioactivity. The D-ring is attached to His-247 of the catalytic triad. The hydrolysis of strigolactone into a covalently linked intermediate molecule initiates a conformational change of D14 to facilitate interaction with MAX2 and formation of the D14-MAX2-SKP1/ASK1 complex to trigger strigolactone signaling. This mechanism defines D14 as a non-canonical hormone receptor with dual functions to generate and sense the active form of strigolactone. In Arabidopsis thaliana (Mouse-ear cress), this protein is Strigolactone esterase D14.